The following is a 552-amino-acid chain: MRVSLRFTILAVSAMIFFPVIVFIYVVEAHTSPKVIADDQERSYGVICDAGSTGTRLFVYNWISTSDSELIQIEPVIYDNKPVMKKISPGLSTFGTKPAQAAEYLRPLMELAERHIPEEKRPYTPVFIFATAGMRLIPDEQKEAVLKNLRNKLPKITSMQVLKEHIRIIEGKWEGIYSWIAVNYALGKFNKTATLDFPGTSPAHARQKTVGMIDMGGASAQIAFELPDTDSFSSINVENINLGCREDDSLFKYKLFVTTFLGYGVNEGIRKYEHMLLSKLKDQNGTVIQDDCMPLNLHKTVTLENGENFVRRGTGNWNTCSNEVKKLLNPESSSEVCKAEAAKCYFGAVPAPSIPLSNIEMYGFSEYWYSTHDVLGLGGQYDAENIAKKTQQYCSKRWSTIQAESKKQLYPRADEERLRTQCFKSAWITSVLHDGFSVDKTHNKFQSVSTIAGQEVQWALGAMIYHMRFFPLRDSSRNLIVKETHSSSESLWAPLFFLSAVFCLFVLVCAKEQSVLCFDDKRRSSFGMSRSQYSYKMLKENRTSSSFLENFA.

Residues 1 to 6 (MRVSLR) are Cytoplasmic-facing. The chain crosses the membrane as a helical span at residues 7–27 (FTILAVSAMIFFPVIVFIYVV). At 28–489 (EAHTSPKVIA…IVKETHSSSE (462 aa)) the chain is on the lumenal side. Glutamate 174 functions as the Proton acceptor in the catalytic mechanism. N-linked (GlcNAc...) asparagine glycans are attached at residues asparagine 190 and asparagine 284. A helical membrane pass occupies residues 490–510 (SLWAPLFFLSAVFCLFVLVCA). Residues 511-552 (KEQSVLCFDDKRRSSFGMSRSQYSYKMLKENRTSSSFLENFA) are Cytoplasmic-facing.

It belongs to the GDA1/CD39 NTPase family. As to expression, expressed in body wall muscles.

Its subcellular location is the golgi apparatus membrane. It carries out the reaction a ribonucleoside 5'-diphosphate + H2O = a ribonucleoside 5'-phosphate + phosphate + H(+). Functionally, seems to be able to hydrolyze ADP, UDP and GDP. Supports mig-17 glycosylation and surface expression, which is required for proper migration of distal tip cells during gonad morphogenesis. The protein is Nucleoside-diphosphatase mig-23 (mig-23) of Caenorhabditis elegans.